A 258-amino-acid chain; its full sequence is Protein OS-9 homolog (258 aa).

Positions 1–18 (MNWTSLVYLWFIFKSIFA) are cleaved as a signal peptide. Asparagine 2, asparagine 51, and asparagine 70 each carry an N-linked (GlcNAc...) asparagine glycan. An MRH domain is found at 114–237 (TSCVFSFNLH…HINVPKLCSL (124 aa)). An intrachain disulfide couples cysteine 116 to cysteine 132. A mannooligosaccharide derivative-binding residues include tryptophan 127 and glutamine 139. Asparagine 165 carries an N-linked (GlcNAc...) asparagine glycan. Intrachain disulfides connect cysteine 193/cysteine 223 and cysteine 208/cysteine 235. Residues aspartate 194, arginine 200, glutamate 219, and tyrosine 225 each coordinate a mannooligosaccharide derivative.

The protein belongs to the OS-9 family. In terms of assembly, interacts with missfolded ER lumenal proteins.

It localises to the endoplasmic reticulum membrane. In terms of biological role, lectin involved in the quality control of the secretory pathway. As a member of the endoplasmic reticulum-associated degradation lumenal (ERAD-L) surveillance system, targets misfolded endoplasmic reticulum lumenal glycoproteins for degradation. The chain is Protein OS-9 homolog (YOS9) from Candida albicans (strain SC5314 / ATCC MYA-2876) (Yeast).